The chain runs to 66 residues: Sodium/potassium-transporting ATPase subunit gamma (66 aa).

The chain crosses the membrane as a helical span at residues 29 to 46 (GGLIFAGLAFIVGLLILL).

Belongs to the FXYD family. Regulatory subunit of the sodium/potassium-transporting ATPase which is composed of a catalytic alpha subunit, an auxiliary non-catalytic beta subunit and an additional regulatory subunit. In terms of tissue distribution, expressed in the distal convoluted tubule in the kidney. Found on basolateral membranes of nephron epithelial cells.

It is found in the membrane. Its function is as follows. May be involved in forming the receptor site for cardiac glycoside binding or may modulate the transport function of the sodium ATPase. The protein is Sodium/potassium-transporting ATPase subunit gamma (FXYD2) of Homo sapiens (Human).